The chain runs to 320 residues: Cyclin-H (320 aa).

Phosphoserine; by CDK8 is present on Ser-5. Phosphoserine is present on Ser-132. Position 304 is a phosphoserine; by CDK8 (Ser-304).

The protein belongs to the cyclin family. Cyclin C subfamily. In terms of assembly, associates primarily with CDK7 and MAT1 to form the CAK complex. CAK can further associate with the core-TFIIH to form the TFIIH basal transcription factor.

Its subcellular location is the nucleus. Its function is as follows. Regulates CDK7, the catalytic subunit of the CDK-activating kinase (CAK) enzymatic complex. CAK activates the cyclin-associated kinases CDK1, CDK2, CDK4 and CDK6 by threonine phosphorylation. CAK complexed to the core-TFIIH basal transcription factor activates RNA polymerase II by serine phosphorylation of the repetitive C-terminal domain (CTD) of its large subunit (POLR2A), allowing its escape from the promoter and elongation of the transcripts. Involved in cell cycle control and in RNA transcription by RNA polymerase II. Its expression and activity are constant throughout the cell cycle. This is Cyclin-H (CCNH) from Bos taurus (Bovine).